The primary structure comprises 193 residues: Adenine phosphoribosyltransferase (193 aa).

It belongs to the purine/pyrimidine phosphoribosyltransferase family. In terms of assembly, homodimer.

The protein localises to the cytoplasm. The catalysed reaction is AMP + diphosphate = 5-phospho-alpha-D-ribose 1-diphosphate + adenine. It functions in the pathway purine metabolism; AMP biosynthesis via salvage pathway; AMP from adenine: step 1/1. In terms of biological role, catalyzes a salvage reaction resulting in the formation of AMP, that is energically less costly than de novo synthesis. This Bifidobacterium animalis subsp. lactis (strain AD011) protein is Adenine phosphoribosyltransferase.